A 149-amino-acid chain; its full sequence is Protein OPG200 (149 aa).

The protein belongs to the orthopoxvirus OPG200 family. Homodimers. Interacts with host IKBKB; this interaction inhibits host NF-kappa-B activation.

Its function is as follows. Contributes to virulence by binding to the host IKBKB subunit of the IKK complex and preventing host NF-kappa-B activation in response to pro-inflammatory stimuli such as TNF-alpha or IL1B. Mechanistically, sterically hinders the direct contact between the kinase domains of IKBKB in the IKK complex containing IKBKB, CHUK/IKKA and NEMO. The sequence is that of Protein OPG200 (OPG200) from Vaccinia virus (strain Western Reserve) (VACV).